A 50-amino-acid polypeptide reads, in one-letter code: Monellin chain B (50 aa).

Heterodimer of an A chain and a B chain.

Functionally, taste-modifying protein; intensely sweet-tasting protein. This chain is Monellin chain B, found in Dioscoreophyllum cumminsii (Serendipity berry).